Consider the following 714-residue polypeptide: MAESEVLHRRAPSRSSWLRVRKARPHLLLSRRGRRRFGVLTRVELRRLRRRLLRAHALGGDWKQVAPAGAHVAVKCKLRARSRPAPRSPPTPSVPPAPCTASATCSLLNPRNHSTPQSRAGRPVRKVSPNVTQPVRDLGSGRVLMMLPPGEGFTFSGICRVTCVYGQLEVYGHIINQGQPPQDVFSVYTHSYLTINGVPYAEPEKSEKAIRREIRALLKPYTKLDDRNWVVRYFPPLGSIMILERMQSRFVDFLKTYKCSSYVLLQENAPVRVNSEFTTLKKIGIRRQKRKKAICLSESGLCALEELVSVSCDGCPVILLCGACDIGKSTFNRILINQLLNSIPGVDYLECDLGQTEFTPPGCVALLTITEPLLGPPYTHQRKPQRMVYYGKMNCYNDYENYIDIVKYVFRDYKREFPLIINTMGWVSDNGLRLLVDLIRVLSPNYVVQLYSDRCKFTPTLTSEYVELTDGLYTKSKIKRYRGFEIPEFGDNLEFTYEEKESSPLPVFTGHVLLSVHSEFLSSKNEKNRAKYNRIFRDLAVLGYLSQLMLPVPESLSPLHSLTPYQVPFSAVAIRVLHADVAPTHILYAVNASWVGLCRIVDDMKGYTRGPILLAQNPICDCLGFGICRGIDMDKRTYHILTPLPPEELKTVNCLLVGSISIPHCIFQNQPGPEGSVPYVTTDYNLNIPGATEKIGEREYGKAFPRHKLRQRRK.

At Ala-2 the chain carries N-acetylalanine. The short motif at 31-47 (RRGRRRFGVLTRVELRR) is the Nucleolar localization signal element. The disordered stretch occupies residues 80–133 (ARSRPAPRSPPTPSVPPAPCTASATCSLLNPRNHSTPQSRAGRPVRKVSPNVTQ). The span at 86-98 (PRSPPTPSVPPAP) shows a compositional bias: pro residues. Positions 107–118 (LLNPRNHSTPQS) are enriched in polar residues. Phosphoserine is present on Ser-128. 322 to 329 (GACDIGKS) lines the ATP pocket. Residues 495-714 (FTYEEKESSP…PRHKLRQRRK (220 aa)) form an interaction with LAS1L region. A Glycyl lysine isopeptide (Lys-Gly) (interchain with G-Cter in SUMO2) cross-link involves residue Lys-500. Ser-502 carries the post-translational modification Phosphoserine.

This sequence belongs to the Clp1 family. NOL9/GRC3 subfamily. In terms of assembly, interacts with PELP1, WDR18 and SENP3. Interacts with LAS1L to form an ITS2 pre-rRNA endonuclease-kinase complex.

It localises to the nucleus. The protein localises to the nucleolus. It catalyses the reaction a 5'-end dephospho-2'-deoxyribonucleoside-DNA + ATP = a 5'-end 5'-phospho-2'-deoxyribonucleoside-DNA + ADP + H(+). The catalysed reaction is a 5'-end dephospho-ribonucleoside-RNA + ATP = a 5'-end 5'-phospho-ribonucleoside-RNA + ADP + H(+). Polynucleotide kinase that can phosphorylate the 5'-hydroxyl groups of single-stranded and double-stranded RNA and DNA substrates. Involved in rRNA processing and its kinase activity is required for the processing of the 32S precursor into 5.8S and 28S rRNAs, more specifically for the generation of the major 5.8S(S) form. Required for the efficient pre-rRNA processing of internal transcribed spacer 2 (ITS2). Associates with LAS1L to form an ITS2 pre-rRNA endonuclease-kinase complex and is responsible for the transport of this complex into the nucleolus. The chain is Polynucleotide 5'-hydroxyl-kinase NOL9 from Mus musculus (Mouse).